The sequence spans 138 residues: Small ribosomal subunit protein uS9 (138 aa).

The protein belongs to the universal ribosomal protein uS9 family.

This is Small ribosomal subunit protein uS9 (rps9) from Sulfolobus acidocaldarius (strain ATCC 33909 / DSM 639 / JCM 8929 / NBRC 15157 / NCIMB 11770).